The primary structure comprises 1052 residues: Germline survival defective-1 (1052 aa).

Positions 1-25 (MRCLISYLFHSFLIFLKFIRSDVTA) are cleaved as a signal peptide. Disordered regions lie at residues 41–320 (LMKS…DPKN), 478–543 (VNGI…QSVP), 667–689 (PSSQAVGDENDTDSDHESEEEFE), 933–965 (KQTLLSKKGDHRTRSDGEGSQQNGGTSSSNSYA), and 1033–1052 (SNNTGGVNGNSGGGNQNSNF). A compositionally biased stretch (low complexity) spans 67–145 (ATATAAATTQ…SSTSSTSQQT (79 aa)). The span at 163–172 (TSNTANSQSG) shows a compositional bias: polar residues. Residues 178–190 (TNKDRPKEKEKNT) are compositionally biased toward basic and acidic residues. The span at 244-279 (NAKSSGFLSNSSLSSAGQISASSAPPVSTTPTAIPI) shows a compositional bias: low complexity. Residues 305–320 (KRDEEPMPYKSTDPKN) are compositionally biased toward basic and acidic residues. Positions 424-732 (QHPPGLPPLL…QIEKNDNLFS (309 aa)) are gld-4 binding. Polar residues predominate over residues 480-514 (GISNNIPSDRQQLDSKPNTARGSSGNINQSNTTSP). Positions 674-689 (DENDTDSDHESEEEFE) are enriched in acidic residues. Residues 892–1052 (PIELPVNMQP…SGGGNQNSNF (161 aa)) are gld-3 binding. Residues 950 to 963 (EGSQQNGGTSSSNS) show a composition bias toward low complexity. A compositionally biased stretch (gly residues) spans 1038–1052 (GVNGNSGGGNQNSNF).

In terms of assembly, isoform C interacts (via C-terminus) with gld-3 isoform A (via C-terminus) in an RNA-independent manner. Isoform C interacts with gld-4. Expressed in the germline (at protein level). In the early embryo is expressed in all cells, then becomes gradually restricted to the germ cell lineage and enriches in P granules (at protein level). In adult hermaphrodites, is expressed in the mitotic region, accumulates during early stages of meiotic prophase I and is slightly less abundant in maturing oocytes (at protein level).

The protein resides in the cytoplasm. It is found in the cytoplasmic granule. In terms of biological role, required maternally for germline survival by forming a maternal complex with gld-3. During hermaphrodite development forms a complex with gld-3 which promotes the sperm/oocyte switch freeing the translational repressor fbf to turn off sperm promoting factors. Required for proper oocyte differentiation and oogenic meiotic arrest. Stimulates the enzymatic activity of gld-4 and together they prevent gld-1 mRNA degradation. In Caenorhabditis elegans, this protein is Germline survival defective-1.